A 281-amino-acid polypeptide reads, in one-letter code: Nucleotide-binding protein MADE_1004170 (281 aa).

8–15 (GRSGSGKS) contacts ATP. 56–59 (DVRN) lines the GTP pocket.

Belongs to the RapZ-like family.

Its function is as follows. Displays ATPase and GTPase activities. This Alteromonas mediterranea (strain DSM 17117 / CIP 110805 / LMG 28347 / Deep ecotype) protein is Nucleotide-binding protein MADE_1004170.